The primary structure comprises 94 residues: Phosphoribosyl-ATP pyrophosphatase (94 aa).

Belongs to the PRA-PH family.

It localises to the cytoplasm. The catalysed reaction is 1-(5-phospho-beta-D-ribosyl)-ATP + H2O = 1-(5-phospho-beta-D-ribosyl)-5'-AMP + diphosphate + H(+). It functions in the pathway amino-acid biosynthesis; L-histidine biosynthesis; L-histidine from 5-phospho-alpha-D-ribose 1-diphosphate: step 2/9. The sequence is that of Phosphoribosyl-ATP pyrophosphatase from Saccharolobus islandicus (strain M.16.27) (Sulfolobus islandicus).